We begin with the raw amino-acid sequence, 484 residues long: Trigger factor (484 aa).

Residues 162–243 (GDFISIDLSA…VKSVKERELP (82 aa)) form the PPIase FKBP-type domain. The tract at residues 427 to 484 (DGNTIDTSEFFGKPPENDVTDLLDDDADGDAGVDADGDTENSAEPADADSADAAQGAG) is disordered. Positions 444–476 (DVTDLLDDDADGDAGVDADGDTENSAEPADADS) are enriched in acidic residues.

It belongs to the FKBP-type PPIase family. Tig subfamily.

The protein resides in the cytoplasm. The catalysed reaction is [protein]-peptidylproline (omega=180) = [protein]-peptidylproline (omega=0). In terms of biological role, involved in protein export. Acts as a chaperone by maintaining the newly synthesized protein in an open conformation. Functions as a peptidyl-prolyl cis-trans isomerase. This Mycobacterium marinum (strain ATCC BAA-535 / M) protein is Trigger factor.